Here is a 291-residue protein sequence, read N- to C-terminus: MSALANHAFAKMNGIGNEIVVVDMRDSTAKVTPDDARAVASAQGGVPYDQLMVLQKPRLDGTEAFISIYNNDGSEAGACGNGMRCVVRRIFEKTGQATATFETAAGLLNAWQGPAPDLYTVDMGVPKFGWQDIPLAEEFRDTRYIELQIGPIDNPILHSPSVVSMGNPHAIFWVDDVNAYDLARFGPLLENHPIFPERANITLAHIVDRDHITIRTWERGAGLTRACGSAACATAVAAARLKRAERNVEITLPGGKLGIEWRERDDHVLMTGTATFEYEGNFDPALFAPAG.

Substrate is bound by residues Asn-17, Gln-50, and Asn-70. The Proton donor role is filled by Cys-79. Substrate is bound by residues 80 to 81 (GN), Asn-167, Asn-200, and 218 to 219 (ER). Catalysis depends on Cys-227, which acts as the Proton acceptor. Residue 228–229 (GS) coordinates substrate.

Belongs to the diaminopimelate epimerase family. Homodimer.

The protein resides in the cytoplasm. The catalysed reaction is (2S,6S)-2,6-diaminopimelate = meso-2,6-diaminopimelate. It functions in the pathway amino-acid biosynthesis; L-lysine biosynthesis via DAP pathway; DL-2,6-diaminopimelate from LL-2,6-diaminopimelate: step 1/1. Its function is as follows. Catalyzes the stereoinversion of LL-2,6-diaminopimelate (L,L-DAP) to meso-diaminopimelate (meso-DAP), a precursor of L-lysine and an essential component of the bacterial peptidoglycan. The chain is Diaminopimelate epimerase from Bradyrhizobium diazoefficiens (strain JCM 10833 / BCRC 13528 / IAM 13628 / NBRC 14792 / USDA 110).